The chain runs to 228 residues: Ribulose-phosphate 3-epimerase, cytoplasmic isoform (228 aa).

Serine 12 contributes to the substrate binding site. 3 residues coordinate a divalent metal cation: histidine 37, aspartate 39, and histidine 70. Aspartate 39 serves as the catalytic Proton acceptor. Substrate contacts are provided by residues histidine 70, 150-153 (GFGG), 179-181 (DGG), and 201-202 (GS). Aspartate 179 contributes to the a divalent metal cation binding site. Aspartate 179 functions as the Proton donor in the catalytic mechanism.

The protein belongs to the ribulose-phosphate 3-epimerase family. As to quaternary structure, homodimer. Co(2+) is required as a cofactor. The cofactor is Fe(2+). Requires Mn(2+) as cofactor. Zn(2+) serves as cofactor. As to expression, predominantly accumulates in roots and seedlings.

The protein resides in the cytoplasm. It catalyses the reaction D-ribulose 5-phosphate = D-xylulose 5-phosphate. It participates in carbohydrate degradation; pentose phosphate pathway; D-xylulose 5-phosphate from D-ribulose 5-phosphate (non-oxidative stage): step 1/1. Functionally, catalyzes the reversible epimerization of D-ribulose 5-phosphate to D-xylulose 5-phosphate. The polypeptide is Ribulose-phosphate 3-epimerase, cytoplasmic isoform (Oryza sativa subsp. japonica (Rice)).